The primary structure comprises 318 residues: NADH-ubiquinone oxidoreductase chain 1 (318 aa).

The next 8 helical transmembrane spans lie at 2–22 (FFIN…FLTL), 70–90 (MFIL…IPLP), 100–120 (LGVL…LWSG), 147–167 (AIIL…TLII), 171–191 (HMWL…STLA), 223–243 (FFLA…ILFF), 253–273 (ELYS…FLWI), and 294–314 (LPLT…TASI).

It belongs to the complex I subunit 1 family. In terms of assembly, core subunit of respiratory chain NADH dehydrogenase (Complex I) which is composed of 45 different subunits.

Its subcellular location is the mitochondrion inner membrane. It carries out the reaction a ubiquinone + NADH + 5 H(+)(in) = a ubiquinol + NAD(+) + 4 H(+)(out). Core subunit of the mitochondrial membrane respiratory chain NADH dehydrogenase (Complex I) which catalyzes electron transfer from NADH through the respiratory chain, using ubiquinone as an electron acceptor. Essential for the catalytic activity and assembly of complex I. The sequence is that of NADH-ubiquinone oxidoreductase chain 1 (MT-ND1) from Canis lupus familiaris (Dog).